The following is a 351-amino-acid chain: Ribosomal RNA small subunit methyltransferase H (351 aa).

Residues 48 to 50, aspartate 67, phenylalanine 94, aspartate 115, and glutamine 122 contribute to the S-adenosyl-L-methionine site; that span reads GGY. Residues 274-351 are disordered; sequence AAQASRHVPG…PAPQGRGPRR (78 aa).

This sequence belongs to the methyltransferase superfamily. RsmH family.

Its subcellular location is the cytoplasm. The catalysed reaction is cytidine(1402) in 16S rRNA + S-adenosyl-L-methionine = N(4)-methylcytidine(1402) in 16S rRNA + S-adenosyl-L-homocysteine + H(+). Specifically methylates the N4 position of cytidine in position 1402 (C1402) of 16S rRNA. This Methylorubrum extorquens (strain ATCC 14718 / DSM 1338 / JCM 2805 / NCIMB 9133 / AM1) (Methylobacterium extorquens) protein is Ribosomal RNA small subunit methyltransferase H.